The primary structure comprises 346 residues: Phosphoribosylformylglycinamidine cyclo-ligase (346 aa).

It belongs to the AIR synthase family.

It localises to the cytoplasm. The catalysed reaction is 2-formamido-N(1)-(5-O-phospho-beta-D-ribosyl)acetamidine + ATP = 5-amino-1-(5-phospho-beta-D-ribosyl)imidazole + ADP + phosphate + H(+). Its pathway is purine metabolism; IMP biosynthesis via de novo pathway; 5-amino-1-(5-phospho-D-ribosyl)imidazole from N(2)-formyl-N(1)-(5-phospho-D-ribosyl)glycinamide: step 2/2. This chain is Phosphoribosylformylglycinamidine cyclo-ligase, found in Geobacillus kaustophilus (strain HTA426).